The following is a 393-amino-acid chain: MLISLSQWLQLLYPEQLGFLRVFQYLTFRAVMAAMTALLIGLALGPIVIRRLTELKIGQPIREYGVAEHMVKQGTPTMGGALILLAIAISTLLWFDWSNRFVWIVMIVTFGFGAIGWVDDWRKVVDKNPEGMRSREKYFWQSLIGLVAALYLAFSVSETSNLRVLELFIRWVQSGFSNDLPPKADLIVPFFKSISYPLGVFGFIFLTYVVIVGSSNAVNLTDGLDGLAIMPVVMVGSALGIFAYATGSSVYANYLLLPHIPGAGELMIFCAAMAGAGLAFLWFNAYPAQVFMGDVGALALGGALGTIAVIVRQEVVLAIMGGIFVLEALSVMAQVTWFKYTKRRYGAGRRILLMAPLHHHFEKSGWKETQVVVRFWIITMLLCLVGLSSLKLR.

A run of 10 helical transmembrane segments spans residues 29–49, 75–95, 101–121, 138–158, 193–213, 226–246, 263–283, 290–310, 315–335, and 370–390; these read RAVM…PIVI, TPTM…LLWF, FVWI…VDDW, YFWQ…SVSE, SISY…VIVG, GLAI…AYAT, AGEL…FLWF, VFMG…IAVI, VVLA…MAQV, and QVVV…LSSL.

Belongs to the glycosyltransferase 4 family. MraY subfamily. The cofactor is Mg(2+).

Its subcellular location is the cell inner membrane. The catalysed reaction is UDP-N-acetyl-alpha-D-muramoyl-L-alanyl-gamma-D-glutamyl-meso-2,6-diaminopimeloyl-D-alanyl-D-alanine + di-trans,octa-cis-undecaprenyl phosphate = di-trans,octa-cis-undecaprenyl diphospho-N-acetyl-alpha-D-muramoyl-L-alanyl-D-glutamyl-meso-2,6-diaminopimeloyl-D-alanyl-D-alanine + UMP. The protein operates within cell wall biogenesis; peptidoglycan biosynthesis. Catalyzes the initial step of the lipid cycle reactions in the biosynthesis of the cell wall peptidoglycan: transfers peptidoglycan precursor phospho-MurNAc-pentapeptide from UDP-MurNAc-pentapeptide onto the lipid carrier undecaprenyl phosphate, yielding undecaprenyl-pyrophosphoryl-MurNAc-pentapeptide, known as lipid I. The chain is Phospho-N-acetylmuramoyl-pentapeptide-transferase from Methylibium petroleiphilum (strain ATCC BAA-1232 / LMG 22953 / PM1).